The following is a 231-amino-acid chain: Probable septum site-determining protein MinC (231 aa).

This sequence belongs to the MinC family. In terms of assembly, interacts with MinD and FtsZ.

In terms of biological role, cell division inhibitor that blocks the formation of polar Z ring septums. Rapidly oscillates between the poles of the cell to destabilize FtsZ filaments that have formed before they mature into polar Z rings. Prevents FtsZ polymerization. The protein is Probable septum site-determining protein MinC of Baumannia cicadellinicola subsp. Homalodisca coagulata.